Consider the following 247-residue polypeptide: Acetate transporter protein patA (247 aa).

N20 is a glycosylation site (N-linked (GlcNAc...) asparagine). 6 helical membrane-spanning segments follow: residues 37–57, 71–91, 106–126, 141–161, 169–189, and 202–222; these read PPITPIGSPTALGMGAFAIAF, AITNAYIGNCFFTAGLGLVLV, VFGGFGLFNLAFGAINAPAFG, ALGYFLLVWGVFVLFFTIAAM, AMLGTSQITYTLLAASYFAMA, and AAGAFGFVSGLLAWYVVAHLM.

This sequence belongs to the acetate uptake transporter (AceTr) (TC 2.A.96) family.

The protein localises to the endoplasmic reticulum membrane. Its pathway is mycotoxin biosynthesis; patulin biosynthesis. Its function is as follows. Acetate transporter protein; part of the gene cluster that mediates the biosynthesis of patulin, an acetate-derived tetraketide mycotoxin produced by several fungal species that shows antimicrobial properties against several bacteria. May be involved in the uptake of acetate, a substrate for the synthesis of 6-methylsalicylic acid by the polyketide synthase patK. The protein is Acetate transporter protein patA of Aspergillus clavatus (strain ATCC 1007 / CBS 513.65 / DSM 816 / NCTC 3887 / NRRL 1 / QM 1276 / 107).